Consider the following 155-residue polypeptide: MRPVVRVIREDWADTALPLPGYETAGAAGADLRANLPPESRAEGLVLAPLGRVLVPTGLRIEIPDGFEVQIRPRSGLALKHGISLPNSPGTIDSDYRGPLGVILVNLGDEPFRVAHGDRIAQMVVAPVVQARFELADGLGATARGAGGFGSTGTA.

Substrate contacts are provided by residues 74–76 (RSG), Asn-87, and 91–93 (TID).

Belongs to the dUTPase family. Mg(2+) serves as cofactor.

The catalysed reaction is dUTP + H2O = dUMP + diphosphate + H(+). Its pathway is pyrimidine metabolism; dUMP biosynthesis; dUMP from dCTP (dUTP route): step 2/2. This enzyme is involved in nucleotide metabolism: it produces dUMP, the immediate precursor of thymidine nucleotides and it decreases the intracellular concentration of dUTP so that uracil cannot be incorporated into DNA. The chain is Deoxyuridine 5'-triphosphate nucleotidohydrolase from Cereibacter sphaeroides (strain ATCC 17023 / DSM 158 / JCM 6121 / CCUG 31486 / LMG 2827 / NBRC 12203 / NCIMB 8253 / ATH 2.4.1.) (Rhodobacter sphaeroides).